The primary structure comprises 280 residues: Urease accessory protein UreD 3 (280 aa).

Belongs to the UreD family. UreD, UreF and UreG form a complex that acts as a GTP-hydrolysis-dependent molecular chaperone, activating the urease apoprotein by helping to assemble the nickel containing metallocenter of UreC. The UreE protein probably delivers the nickel.

Its subcellular location is the cytoplasm. Its function is as follows. Required for maturation of urease via the functional incorporation of the urease nickel metallocenter. The protein is Urease accessory protein UreD 3 of Bradyrhizobium sp. (strain ORS 278).